The following is a 541-amino-acid chain: MSPAGKGPAWRQPAILAAAGAAHALSFAPDPLPAWSLAPVQVIALAVAAHASLQAPSARRALARGWLFAMFSFSLGLYWLYVSMHDYGGLAAPLAAAGVLALSAFLALFPGLACAAARWLCPPHWDASPPARARRTLYTAATWAACWAALEWLRAVVLTGFPWLNIGYAHVDSPLAGWAPLLGVHGMALLAAFAAAALAGLWQSASGRIDSRQALAAGVALLLAGAGWLLGQFSWSRPEGKPLHLRLVQGNVEQSQKFDPALLETGLRRHLELASLPPRPGEPKPDLIILPETVLPVFQDQLPASVWDAWIEVARRADTRIAMGVPLHTQPDGATGHRYTNSVIGFDASTPVEQLRTGTTAMRYDKQHLVPWGEYVPPGFRWFVDMLDIPLGDFDRGAARQPSFDIAGQRIAFNICYEDLFGPGLLPALQDGPDGRPGATIMANVSNLGWFGNTWALRQHLQIGRLRTMETARPMVAATNTGITAAIDARGRVAAALPAGRAGVLPVAVQGMTGLTPYARFGDKPALALIGLLLIAAPALG.

6 helical membrane-spanning segments follow: residues 31-51 (PLPA…AAHA), 65-85 (GWLF…VSMH), 89-109 (GLAA…LALF), 144-164 (AACW…FPWL), 181-201 (LLGV…LAGL), and 215-235 (LAAG…QFSW). A CN hydrolase domain is found at 248-511 (VQGNVEQSQK…AGVLPVAVQG (264 aa)). Glu292 (proton acceptor) is an active-site residue. Lys366 is an active-site residue. The active-site Nucleophile is the Cys416.

This sequence belongs to the CN hydrolase family. Apolipoprotein N-acyltransferase subfamily.

The protein localises to the cell inner membrane. The enzyme catalyses N-terminal S-1,2-diacyl-sn-glyceryl-L-cysteinyl-[lipoprotein] + a glycerophospholipid = N-acyl-S-1,2-diacyl-sn-glyceryl-L-cysteinyl-[lipoprotein] + a 2-acyl-sn-glycero-3-phospholipid + H(+). It functions in the pathway protein modification; lipoprotein biosynthesis (N-acyl transfer). In terms of biological role, catalyzes the phospholipid dependent N-acylation of the N-terminal cysteine of apolipoprotein, the last step in lipoprotein maturation. This is Putative apolipoprotein N-acyltransferase from Bordetella parapertussis (strain 12822 / ATCC BAA-587 / NCTC 13253).